Reading from the N-terminus, the 441-residue chain is MSANGPSHPARELKAGGSLSGHVKVPGDKSISHRSLLFGAIAEGTTTIDGLLPAEDPISTAACLRAMGVLISPIEAAGLVTVEGVGLDGLQEPAEILDCGNSGTTMRLMLGLLAGRAGRHFVLDGDASLRRRPMRRVGQPLASMGADVRGRDGGNLAPLAVQGQSLRGTVIGTPVASAQVKSALLLAALTADGTTTVIEPAQSRDHSERMLRAFGADLQVGGEMGRHITVRPGNTLKGQQVVVPGDISSAAFWLVAGALVPGADLTIENVGLNPTRTGILEVLEQMNAQIEVLNRRDVAGEPVGDLRITHGPLQPFSIGEEIMPRLVDEVPILSVAACFCDGESRISGASELRVKETDRLAVMARQLKAMGAEIEEHEDGMTIHGGRPLKGAALDSETDHRVAMSLAVASLLASGDSTLQRSDAAAVSYPSFWDDLDRLRC.

The tract at residues 1–21 (MSANGPSHPARELKAGGSLSG) is disordered. Residues lysine 29, serine 30, and arginine 34 each contribute to the 3-phosphoshikimate site. Phosphoenolpyruvate is bound at residue lysine 29. Residues glycine 103 and arginine 132 each contribute to the phosphoenolpyruvate site. 3-phosphoshikimate contacts are provided by serine 177, glutamine 179, aspartate 328, and lysine 355. Residue glutamine 179 coordinates phosphoenolpyruvate. Aspartate 328 functions as the Proton acceptor in the catalytic mechanism. The phosphoenolpyruvate site is built by arginine 359 and arginine 401.

The protein belongs to the EPSP synthase family. As to quaternary structure, monomer.

It is found in the cytoplasm. It carries out the reaction 3-phosphoshikimate + phosphoenolpyruvate = 5-O-(1-carboxyvinyl)-3-phosphoshikimate + phosphate. It participates in metabolic intermediate biosynthesis; chorismate biosynthesis; chorismate from D-erythrose 4-phosphate and phosphoenolpyruvate: step 6/7. Its function is as follows. Catalyzes the transfer of the enolpyruvyl moiety of phosphoenolpyruvate (PEP) to the 5-hydroxyl of shikimate-3-phosphate (S3P) to produce enolpyruvyl shikimate-3-phosphate and inorganic phosphate. In Parasynechococcus marenigrum (strain WH8102), this protein is 3-phosphoshikimate 1-carboxyvinyltransferase.